A 936-amino-acid polypeptide reads, in one-letter code: Probable outer membrane protein pmp7 (936 aa).

Positions 1–23 are cleaved as a signal peptide; the sequence is MKSSVSWLFFSSIPLFSSLSIVA. The Autotransporter domain occupies 636–936; the sequence is GEPFERELWL…NTNLGSKFCF (301 aa).

It belongs to the PMP outer membrane protein family.

The protein resides in the secreted. It localises to the cell wall. Its subcellular location is the cell outer membrane. The protein is Probable outer membrane protein pmp7 (pmp7) of Chlamydia pneumoniae (Chlamydophila pneumoniae).